A 460-amino-acid polypeptide reads, in one-letter code: MAAGWVLSECGLRPLPRIYSRPRIGFTSKTTNLLKLRELPDSKSYNLCSSFKVSSWSNSKQSNWALNVAVPVNVSTVSGEDDREREEFNGIVNVDEGKGEFFDAGAPPPFTLADIRAAIPKHCWVKNPWRSMSYVLRDVVVVFGLAAVAAYFNNWVAWPLYWFCQGTMFWALFVLGHDCGHGSFSNNPKLNSVVGHLLHSSILVPYHGWRISHRTHHQNHGHVENDESWHPLSEKIFKSLDNVTKTLRFSLPFPMLAYPFYLWSRSPGKKGSHFHPDSGLFVPKERKDIITSTACWTAMAALLVYLNFSMGPVQMLKLYGIPYWIFVMWLDFVTYLHHHGHEDKLPWYRGKAWSYLRGGLTTLDRDYGWINNIHHDIGTHVIHHLFPQIPHYHLVEATEAAKPVMGKYYREPKKSGPLPLHLLGSLVRSMKEDHYVSDTGDVVYYQKDPKLSGIGGEKTE.

The Histidine box-1 signature appears at 177-181 (HDCGH). Positions 213 to 217 (HRTHH) match the Histidine box-2 motif. Residues 380 to 384 (HVIHH) carry the Histidine box-3 motif.

This sequence belongs to the fatty acid desaturase type 1 family.

It localises to the plastid. The protein resides in the chloroplast membrane. Its pathway is lipid metabolism; polyunsaturated fatty acid biosynthesis. Its function is as follows. Chloroplast omega-3 fatty acid desaturase introduces the third double bond in the biosynthesis of 16:3 and 18:3 fatty acids, important constituents of plant membranes. It is thought to use ferredoxin as an electron donor and to act on fatty acids esterified to galactolipids, sulfolipids and phosphatidylglycerol. The sequence is that of Omega-3 fatty acid desaturase, chloroplastic (FAD7A-1) from Ricinus communis (Castor bean).